A 152-amino-acid polypeptide reads, in one-letter code: FMN reductase (NADH) RutF (152 aa).

This sequence belongs to the non-flavoprotein flavin reductase family. RutF subfamily.

The catalysed reaction is FMNH2 + NAD(+) = FMN + NADH + 2 H(+). Catalyzes the reduction of FMN to FMNH2 which is used to reduce pyrimidine by RutA via the Rut pathway. The protein is FMN reductase (NADH) RutF of Shigella flexneri.